A 283-amino-acid polypeptide reads, in one-letter code: Glutamate racemase (283 aa).

Substrate is bound by residues 28 to 29 (DS) and 60 to 61 (YG). Residue C92 is the Proton donor/acceptor of the active site. 93–94 (NT) is a binding site for substrate. Catalysis depends on C204, which acts as the Proton donor/acceptor. Position 205 to 206 (205 to 206 (TH)) interacts with substrate.

Belongs to the aspartate/glutamate racemases family.

The enzyme catalyses L-glutamate = D-glutamate. Its pathway is cell wall biogenesis; peptidoglycan biosynthesis. Its function is as follows. Provides the (R)-glutamate required for cell wall biosynthesis. This chain is Glutamate racemase, found in Salmonella enteritidis PT4 (strain P125109).